The following is a 211-amino-acid chain: RNA chaperone ProQ (211 aa).

The tract at residues 113–147 is disordered; that stretch reads RRAVEKANNPKANKKRSVYHSGNKSENKKSAGKKF.

It belongs to the ProQ family.

The protein resides in the cytoplasm. RNA chaperone with significant RNA binding, RNA strand exchange and RNA duplexing activities. The sequence is that of RNA chaperone ProQ from Histophilus somni (strain 129Pt) (Haemophilus somnus).